The primary structure comprises 368 residues: (Iso)eugenol O-methyltransferase (368 aa).

Positions 1 to 2 are excised as a propeptide; it reads MG. Residues S187, 211-212, D234, 254-255, and K268 contribute to the S-adenosyl-L-methionine site; these read GG and DM. Residue H272 is the Proton acceptor of the active site.

Belongs to the class I-like SAM-binding methyltransferase superfamily. Cation-independent O-methyltransferase family. COMT subfamily. Homodimer. As to expression, expressed in petals, style and stamens, but not in stigma, sepals, leaves or stem tissues.

The catalysed reaction is (E)-isoeugenol + S-adenosyl-L-methionine = (E)-isomethyleugenol + S-adenosyl-L-homocysteine + H(+). Functionally, catalyzes the methylation of the para-4-hydroxyl of both eugenol and (iso)eugenol to methyleugenol and isomethyleugenol, respectively. The resulting products are part of a complex mixture of low-molecular-weight volatile compounds emitted by the flowers to attract pollinators. The polypeptide is (Iso)eugenol O-methyltransferase (IEMT1) (Clarkia breweri (Fairy fans)).